The sequence spans 134 residues: Lymphocyte antigen 6S (134 aa).

The first 26 residues, 1-26 (MSSLQAMKTLSLVLLVALLSMERAQG), serve as a signal peptide directing secretion. Residues 28–76 (RCYRCLAVLEGASCSVVSCPFLDGVCVSQKVSVFGSKVRGENKLSLLSC) enclose the UPAR/Ly6 domain. 4 disulfide bridges follow: Cys29-Cys53, Cys32-Cys41, Cys76-Cys98, and Cys99-Cys104. Asn105 carries GPI-anchor amidated asparagine lipidation. Residues 106–134 (AVVLAASSPWALCVQLLLSLGSVFLWALL) constitute a propeptide, removed in mature form.

It localises to the cell membrane. This is Lymphocyte antigen 6S from Homo sapiens (Human).